The sequence spans 372 residues: Aminomethyltransferase (372 aa).

This sequence belongs to the GcvT family. As to quaternary structure, the glycine cleavage system is composed of four proteins: P, T, L and H.

It carries out the reaction N(6)-[(R)-S(8)-aminomethyldihydrolipoyl]-L-lysyl-[protein] + (6S)-5,6,7,8-tetrahydrofolate = N(6)-[(R)-dihydrolipoyl]-L-lysyl-[protein] + (6R)-5,10-methylene-5,6,7,8-tetrahydrofolate + NH4(+). Functionally, the glycine cleavage system catalyzes the degradation of glycine. This chain is Aminomethyltransferase, found in Prochlorococcus marinus (strain NATL1A).